Consider the following 283-residue polypeptide: Bifunctional protein FolD (283 aa).

NADP(+) is bound by residues 166–168, serine 191, and threonine 232; that span reads GRS.

It belongs to the tetrahydrofolate dehydrogenase/cyclohydrolase family. As to quaternary structure, homodimer.

It carries out the reaction (6R)-5,10-methylene-5,6,7,8-tetrahydrofolate + NADP(+) = (6R)-5,10-methenyltetrahydrofolate + NADPH. The enzyme catalyses (6R)-5,10-methenyltetrahydrofolate + H2O = (6R)-10-formyltetrahydrofolate + H(+). It functions in the pathway one-carbon metabolism; tetrahydrofolate interconversion. Its function is as follows. Catalyzes the oxidation of 5,10-methylenetetrahydrofolate to 5,10-methenyltetrahydrofolate and then the hydrolysis of 5,10-methenyltetrahydrofolate to 10-formyltetrahydrofolate. The protein is Bifunctional protein FolD of Halothermothrix orenii (strain H 168 / OCM 544 / DSM 9562).